The sequence spans 105 residues: uncharacterized protein (105 aa).

A signal peptide spans 1 to 19 (MKLVFIFATAAIMGVVVYG).

This is an uncharacterized protein from Magallana gigas (Pacific oyster).